Reading from the N-terminus, the 307-residue chain is Aspartate carbamoyltransferase catalytic subunit (307 aa).

Carbamoyl phosphate is bound by residues R56 and T57. Residue K84 participates in L-aspartate binding. Residues R106, H136, and Q139 each coordinate carbamoyl phosphate. The L-aspartate site is built by R169 and R221. The carbamoyl phosphate site is built by A262 and P263.

This sequence belongs to the aspartate/ornithine carbamoyltransferase superfamily. ATCase family. In terms of assembly, heterododecamer (2C3:3R2) of six catalytic PyrB chains organized as two trimers (C3), and six regulatory PyrI chains organized as three dimers (R2).

The catalysed reaction is carbamoyl phosphate + L-aspartate = N-carbamoyl-L-aspartate + phosphate + H(+). Its pathway is pyrimidine metabolism; UMP biosynthesis via de novo pathway; (S)-dihydroorotate from bicarbonate: step 2/3. Functionally, catalyzes the condensation of carbamoyl phosphate and aspartate to form carbamoyl aspartate and inorganic phosphate, the committed step in the de novo pyrimidine nucleotide biosynthesis pathway. The polypeptide is Aspartate carbamoyltransferase catalytic subunit (Streptococcus pneumoniae (strain 70585)).